The primary structure comprises 237 residues: Uridylate kinase (237 aa).

An ATP-binding site is contributed by 12–15 (KLSG). An involved in allosteric activation by GTP region spans residues 20 to 25 (GENGYG). Glycine 54 contacts UMP. ATP is bound by residues glycine 55 and arginine 59. Residues aspartate 72 and 133–140 (TGNPYFST) each bind UMP. ATP contacts are provided by tyrosine 166 and aspartate 169.

It belongs to the UMP kinase family. As to quaternary structure, homohexamer.

Its subcellular location is the cytoplasm. It catalyses the reaction UMP + ATP = UDP + ADP. It participates in pyrimidine metabolism; CTP biosynthesis via de novo pathway; UDP from UMP (UMPK route): step 1/1. Allosterically activated by GTP. Inhibited by UTP. In terms of biological role, catalyzes the reversible phosphorylation of UMP to UDP. In Clostridium tetani (strain Massachusetts / E88), this protein is Uridylate kinase.